The chain runs to 202 residues: MALQQIVEQTVAGLGYDLVEIERSAGGLLRITIDLPWQPPVEGAASDAAAPAGPEAFVTVEDCEKVTRQLQFALEVDGVDYKRLEVSSPGIDRPLRHEQDFQRFAGEVIDITLKAPIGDAAAGQVNANRKKFRGTLERAETGGWQIVWSDEPPPKPGQKVSKKRVPAPLQALGFTLDELRDARLAPIVDFKGRGPKGGPAPD.

Belongs to the RimP family.

The protein resides in the cytoplasm. Required for maturation of 30S ribosomal subunits. This is Ribosome maturation factor RimP from Paracidovorax citrulli (strain AAC00-1) (Acidovorax citrulli).